The primary structure comprises 197 residues: Probable chorismate pyruvate-lyase 2 (197 aa).

Positions 1–14 (MRFDAADAHWRETP) are enriched in basic and acidic residues. The tract at residues 1 to 23 (MRFDAADAHWRETPRPGASSAQK) is disordered. Substrate-binding residues include Arg-73, Leu-111, and Glu-173.

This sequence belongs to the UbiC family.

It is found in the cytoplasm. It carries out the reaction chorismate = 4-hydroxybenzoate + pyruvate. Its pathway is cofactor biosynthesis; ubiquinone biosynthesis. In terms of biological role, removes the pyruvyl group from chorismate, with concomitant aromatization of the ring, to provide 4-hydroxybenzoate (4HB) for the ubiquinone pathway. This is Probable chorismate pyruvate-lyase 2 from Burkholderia pseudomallei (strain 1710b).